Reading from the N-terminus, the 9439-residue chain is Extracellular matrix-binding protein ebh (9439 aa).

FIVAR domains are found at residues 1815–1871 (ARRR…VNSA), 1901–1957 (AKEQ…INDA), 1985–2041 (AYDT…VRDA), 2071–2127 (AKKR…ITSE), 2155–2211 (AYNK…VTQA), 2241–2297 (AKNR…ISSE), 2325–2381 (AYNK…VEDA), 2411–2467 (AKEK…ITEN), 2488–2551 (DTTS…VNNA), 2581–2638 (ARNR…STEI), 2665–2720 (AKNQ…IRTN), 2748–2804 (AKTA…VSDE), 2832–2888 (AYNQ…VNNA), 2918–2974 (AKEQ…ISNA), 3002–3058 (AYNQ…VTAA), 3088–3144 (AKQQ…ITNE), 3172–3228 (AYNQ…VAQA), 3258–3314 (AKNQ…ISDE), 3335–3398 (DTTE…VNNA), 3428–3484 (ARLN…ITTE), 3512–3567 (AKTA…IKTN), 3595–3650 (IKRQ…VKES), 3678–3733 (AKNR…IRQN), 3802–3860 (SMTA…IDQK), 3928–3983 (AMTQ…LDPA), 4056–4114 (AMQA…VNQK), 4182–4240 (SMGT…VDNA), 4308–4365 (AMHT…INQK), 4433–4491 (VMEQ…IEQA), and 4559–4617 (SMQT…IDQT). Positions 2495 to 2507 (EVRKLSRRGDTNN) are enriched in basic and acidic residues. The interval 2495–2514 (EVRKLSRRGDTNNKKPSSVS) is disordered. Positions 2925-2938 (AVDQVPSTEGMTQQ) are enriched in polar residues. A disordered region spans residues 2925–2951 (AVDQVPSTEGMTQQTKDDYNSKQQAAQ). A disordered region spans residues 4649-4674 (GYLNDPQKSGEESLVNGSNTRSEVEE). 14 consecutive FIVAR domains span residues 4685-4743 (AMKQ…IEQK), 4811-4869 (AMQA…IEQA), 4937-4995 (AMSN…IEQA), 5063-5115 (AMEA…VLDK), 5189-5246 (AMLG…INQL), 5314-5372 (LMGA…VTTA), 5440-5498 (AMGE…IDQA), 5566-5624 (AMKK…ITNA), 5692-5750 (AMKQ…IADT), 5818-5875 (DMST…LQDL), 5943-6000 (AMKA…IKQA), 6068-6126 (KMEE…INRT), 6194-6252 (AMQQ…IQAI), and 6320-6378 (EMGT…IADA). A compositionally biased stretch (polar residues) spans 5699–5712 (QVNQDDQISNSSPF). A disordered region spans residues 5699 to 5719 (QVNQDDQISNSSPFINEDSDK). Positions 6413 to 6434 (NNSQRQSEHDEINSAPSRTEVS) are disordered. FIVAR domains lie at 6446-6504 (AMRQ…IEDA), 6572-6630 (AMKA…INRA), 6698-6755 (SMNQ…IDQA), 6823-6877 (TMKA…ANDE), 6949-7007 (AMKK…INTI), 7075-7133 (SMNT…VERA), 7201-7259 (DMKK…IENA), 7327-7384 (AMKH…IKQL), 7452-7510 (AMEN…IEHA), 7578-7636 (AMKA…INSI), 7704-7762 (AMET…VDIV), 7830-7888 (AMKS…VRQA), 7956-8010 (VMGK…TKQA), 8078-8137 (IMGE…IDTF), 8205-8264 (AMKS…IQGL), 8332-8391 (AMKD…VLGL), 8459-8518 (KMKL…IQHL), and 8587-8643 (AMQG…ANII). A helical membrane pass occupies residues 9306–9324 (TVGVITLTGLLSSFWLVLA). Basic and acidic residues-rich tracts occupy residues 9363–9375 (DKEEQIQNDDKHS), 9386–9395 (EKQLSEEDIH), and 9404–9413 (QNSDNKDTKQ). Positions 9363–9439 (DKEEQIQNDD…VVKTKKRSKK (77 aa)) are disordered. Over residues 9414-9439 (KKVTSKKKKTPQSTKKVVKTKKRSKK) the composition is skewed to basic residues.

It localises to the cell membrane. In Staphylococcus epidermidis (strain ATCC 12228 / FDA PCI 1200), this protein is Extracellular matrix-binding protein ebh (ebh).